Here is a 141-residue protein sequence, read N- to C-terminus: Nucleoside diphosphate kinase (141 aa).

Residues lysine 11, phenylalanine 59, arginine 87, threonine 93, arginine 104, and asparagine 114 each contribute to the ATP site. The active-site Pros-phosphohistidine intermediate is histidine 117.

Belongs to the NDK family. In terms of assembly, homotetramer. Mg(2+) is required as a cofactor.

The protein localises to the cytoplasm. The catalysed reaction is a 2'-deoxyribonucleoside 5'-diphosphate + ATP = a 2'-deoxyribonucleoside 5'-triphosphate + ADP. It carries out the reaction a ribonucleoside 5'-diphosphate + ATP = a ribonucleoside 5'-triphosphate + ADP. Its function is as follows. Major role in the synthesis of nucleoside triphosphates other than ATP. The ATP gamma phosphate is transferred to the NDP beta phosphate via a ping-pong mechanism, using a phosphorylated active-site intermediate. The sequence is that of Nucleoside diphosphate kinase from Yersinia enterocolitica serotype O:8 / biotype 1B (strain NCTC 13174 / 8081).